Here is a 581-residue protein sequence, read N- to C-terminus: Prolactin receptor (581 aa).

The N-terminal stretch at 1–24 (MKENAASRVLFILLLFLFASLLNG) is a signal peptide. Topologically, residues 25–237 (QSPPEKPKLI…NDFPVKDTSM (213 aa)) are extracellular. 2 consecutive Fibronectin type-III domains span residues 27–127 (PPEK…IVEP) and 129–229 (PPVN…IPND). Cysteine 36 and cysteine 46 form a disulfide bridge. An N-linked (GlcNAc...) asparagine glycan is attached at asparagine 59. Cysteine 75 and cysteine 86 are joined by a disulfide. Asparagine 132 is a glycosylation site (N-linked (GlcNAc...) asparagine). Zn(2+) contacts are provided by aspartate 211 and histidine 212. The WSXWS motif motif lies at 215-219 (WSEWS). Residues 238-258 (WIFVGVLSAVICLIMVWAVAL) form a helical membrane-spanning segment. The Cytoplasmic segment spans residues 259–581 (KGYSMVTCIL…SAKKAPPALP (323 aa)). The Box 1 motif signature appears at 267–275 (ILPPVPGPK). Basic and acidic residues-rich tracts occupy residues 323 to 349 (QHLMPHPSKEHMEQGVKPMHLDPDTDS) and 375 to 388 (HIPEGPEKLEDPET). Disordered regions lie at residues 323–388 (QHLM…DPET) and 462–492 (FKPSKTIETGGEGKAAKQSESEGYSSEPDQD).

Belongs to the type I cytokine receptor family. Type 1 subfamily. In terms of assembly, interacts with SMARCA1. Interacts with NEK3 and VAV2 and this interaction is prolactin-dependent. Expressed in all tissues examined; liver, pituitary, adrenal gland, ovary and fetal liver.

Its subcellular location is the membrane. This is a receptor for the anterior pituitary hormone prolactin. The polypeptide is Prolactin receptor (PRLR) (Ovis aries (Sheep)).